Consider the following 192-residue polypeptide: NADH-quinone oxidoreductase subunit B 1 (192 aa).

Residues Cys-71, Cys-72, Cys-136, and Cys-166 each contribute to the [4Fe-4S] cluster site.

Belongs to the complex I 20 kDa subunit family. In terms of assembly, NDH-1 is composed of 14 different subunits. Subunits NuoB, C, D, E, F, and G constitute the peripheral sector of the complex. [4Fe-4S] cluster is required as a cofactor.

It localises to the cell inner membrane. It catalyses the reaction a quinone + NADH + 5 H(+)(in) = a quinol + NAD(+) + 4 H(+)(out). Functionally, NDH-1 shuttles electrons from NADH, via FMN and iron-sulfur (Fe-S) centers, to quinones in the respiratory chain. The immediate electron acceptor for the enzyme in this species is believed to be ubiquinone. Couples the redox reaction to proton translocation (for every two electrons transferred, four hydrogen ions are translocated across the cytoplasmic membrane), and thus conserves the redox energy in a proton gradient. In Rhizobium meliloti (strain 1021) (Ensifer meliloti), this protein is NADH-quinone oxidoreductase subunit B 1.